The chain runs to 113 residues: Large ribosomal subunit protein bL17 (113 aa).

Belongs to the bacterial ribosomal protein bL17 family. In terms of assembly, part of the 50S ribosomal subunit. Contacts protein L32.

In Clostridium botulinum (strain ATCC 19397 / Type A), this protein is Large ribosomal subunit protein bL17.